A 20-amino-acid chain; its full sequence is Putative antimicrobial protein 2 (20 aa).

Residues 1 to 20 (DLPECCSATELELDSGKQTS) are disordered.

Its function is as follows. May have antimicrobial activity. The sequence is that of Putative antimicrobial protein 2 from Cenchritis muricatus (Beaded periwinkle).